We begin with the raw amino-acid sequence, 91 residues long: Non-specific lipid-transfer protein P5 (91 aa).

Cystine bridges form between Cys3–Cys50, Cys13–Cys27, Cys28–Cys73, and Cys48–Cys87.

It localises to the secreted. Functionally, plant non-specific lipid-transfer proteins transfer phospholipids as well as galactolipids across membranes. May play a role in wax or cutin deposition in the cell walls of expanding epidermal cells and certain secretory tissues. The protein is Non-specific lipid-transfer protein P5 of Vitis sp. (Grape).